Consider the following 452-residue polypeptide: C4-dicarboxylate transport protein 1 (452 aa).

Transmembrane regions (helical) follow at residues 18–38 (FQVV…PSVG), 51–71 (LIKM…IAGM), 83–103 (LALL…LLLV), 151–171 (AFAK…GFAL), 191–211 (VLFT…FGAM), 229–249 (LMGA…GAIA), 304–324 (GYSF…VFIA), 337–357 (ITLL…TGSG), and 359–379 (IVLA…LALI). The segment at 426–452 (WEEAQEPERVLDKKTEHMPVSAMSDAG) is disordered. A compositionally biased stretch (basic and acidic residues) spans 431-442 (EPERVLDKKTEH).

This sequence belongs to the dicarboxylate/amino acid:cation symporter (DAACS) (TC 2.A.23) family.

Its subcellular location is the cell inner membrane. Functionally, responsible for the transport of dicarboxylates such as succinate, fumarate, and malate from the periplasm across the membrane. This is C4-dicarboxylate transport protein 1 from Polaromonas naphthalenivorans (strain CJ2).